The following is a 135-amino-acid chain: Large ribosomal subunit protein bL21 (135 aa).

Residues 114 to 135 (EAEKETPVLDETPAEEVETAAE) form a disordered region. Over residues 125–135 (TPAEEVETAAE) the composition is skewed to acidic residues.

Belongs to the bacterial ribosomal protein bL21 family. Part of the 50S ribosomal subunit. Contacts protein L20.

In terms of biological role, this protein binds to 23S rRNA in the presence of protein L20. The chain is Large ribosomal subunit protein bL21 from Nostoc punctiforme (strain ATCC 29133 / PCC 73102).